The following is a 339-amino-acid chain: DNA-directed RNA polymerase subunit alpha (339 aa).

The alpha N-terminal domain (alpha-NTD) stretch occupies residues Met1 to Glu233. Residues Gly266–Phe339 form an alpha C-terminal domain (alpha-CTD) region.

This sequence belongs to the RNA polymerase alpha chain family. As to quaternary structure, in plastids the minimal PEP RNA polymerase catalytic core is composed of four subunits: alpha, beta, beta', and beta''. When a (nuclear-encoded) sigma factor is associated with the core the holoenzyme is formed, which can initiate transcription.

The protein resides in the plastid. The protein localises to the chloroplast. It catalyses the reaction RNA(n) + a ribonucleoside 5'-triphosphate = RNA(n+1) + diphosphate. In terms of biological role, DNA-dependent RNA polymerase catalyzes the transcription of DNA into RNA using the four ribonucleoside triphosphates as substrates. This is DNA-directed RNA polymerase subunit alpha from Elymus canadensis (Canada wild rye).